The following is a 445-amino-acid chain: Rab GDP dissociation inhibitor beta (445 aa).

Met1 is subject to N-acetylmethionine. An N6-succinyllysine modification is found at Lys57. Position 112 is an N6-acetyllysine (Lys112). Ser130 carries the phosphoserine modification. Residue Lys269 is modified to N6-acetyllysine. The residue at position 382 (Ser382) is a Phosphoserine.

The protein belongs to the Rab GDI family. Interacts with RHOH. Interacts with the GDP-bound inactive forms of RAB3A, RAB3B, RAB3C, RAB5A, RAB5B, RAB5C, RAB8A, RAB8B, RAB10, RAB12, RAB35, and RAB43; binds RAB3D to a lesser extent. Interacts with DZIP1; this interaction negatively regulates the interaction of GDI2 with GDP-bound RAB8A.

It is found in the cytoplasm. It localises to the membrane. The protein resides in the golgi apparatus. The protein localises to the trans-Golgi network. Functionally, GDP-dissociation inhibitor preventing the GDP to GTP exchange of most Rab proteins. By keeping these small GTPases in their inactive GDP-bound form regulates intracellular membrane trafficking. Negatively regulates protein transport to the cilium and ciliogenesis through the inhibition of RAB8A. The polypeptide is Rab GDP dissociation inhibitor beta (GDI2) (Pongo abelii (Sumatran orangutan)).